The following is a 464-amino-acid chain: 26S proteasome regulatory subunit 7 homolog B (464 aa).

246-253 contributes to the ATP binding site; the sequence is GPPGSGKT. Lysine 452 participates in a covalent cross-link: Glycyl lysine isopeptide (Lys-Gly) (interchain with G-Cter in ubiquitin).

The protein belongs to the AAA ATPase family. In terms of assembly, component of the 19S regulatory particle (RP/PA700) base subcomplex of the 26S proteasome. The 26S proteasome is composed of a core protease (CP), known as the 20S proteasome, capped at one or both ends by the 19S regulatory particle (RP/PA700). The RP/PA700 complex is composed of at least 17 different subunits in two subcomplexes, the base and the lid, which form the portions proximal and distal to the 20S proteolytic core, respectively.

The protein localises to the cytoplasm. It is found in the nucleus. Its function is as follows. The 26S proteasome is involved in the ATP-dependent degradation of ubiquitinated proteins. The regulatory (or ATPase) complex confers ATP dependency and substrate specificity to the 26S complex. The chain is 26S proteasome regulatory subunit 7 homolog B (RPT1B) from Arabidopsis thaliana (Mouse-ear cress).